Here is a 133-residue protein sequence, read N- to C-terminus: Large ribosomal subunit protein eL14 (133 aa).

Belongs to the eukaryotic ribosomal protein eL14 family.

This is Large ribosomal subunit protein eL14 from Pisum sativum (Garden pea).